Reading from the N-terminus, the 209-residue chain is Urease accessory protein UreG (209 aa).

A GTP-binding site is contributed by 11–18 (GPVGSGKT).

This sequence belongs to the SIMIBI class G3E GTPase family. UreG subfamily. As to quaternary structure, homodimer. UreD, UreF and UreG form a complex that acts as a GTP-hydrolysis-dependent molecular chaperone, activating the urease apoprotein by helping to assemble the nickel containing metallocenter of UreC. The UreE protein probably delivers the nickel.

It is found in the cytoplasm. Functionally, facilitates the functional incorporation of the urease nickel metallocenter. This process requires GTP hydrolysis, probably effectuated by UreG. The protein is Urease accessory protein UreG of Edwardsiella ictaluri (strain 93-146).